A 175-amino-acid polypeptide reads, in one-letter code: Pre-mRNA-splicing factor SNT309 (175 aa).

In terms of assembly, belongs to the NTC complex (or PRP19-associated complex), composed of at least CEF1, CLF1, ISY1, NTC20, SNT309, SYF1, SYF2, and PRP19. The NTC complex associates with the spliceosome after the release of the U1 and U4 snRNAs and forms the CWC spliceosome subcomplex (or CEF1-associated complex) reminiscent of a late-stage spliceosome composed also of the U2, U5 and U6 snRNAs and at least BUD13, BUD31, BRR2, CDC40, CUS1, CWC2, CWC15, CWC21, CWC22, CWC23, CWC24, CWC25, CWC27, ECM2, HSH155, IST3, LEA1, MSL1, PRP8, PRP9, PRP11, PRP21, PRP22, PRP45, PRP46, SLU7, SMB1, SMD1, SMD2, SMD3, SMX2, SMX3, SNU114, SPP2, RSE1 and YJU2. Interacts with PRP19.

The protein resides in the nucleus. Involved in pre-mRNA splicing by stabilizing the NTC (or PRP19-associated complex). As a component of the NTC complex, associates to the spliceosome to mediate conformational rearrangement or to stabilize the structure of the spliceosome after U4 snRNA dissociation, which leads to spliceosome maturation. In Saccharomyces cerevisiae (strain ATCC 204508 / S288c) (Baker's yeast), this protein is Pre-mRNA-splicing factor SNT309 (SNT309).